Consider the following 433-residue polypeptide: Glutamate-1-semialdehyde 2,1-aminomutase (433 aa).

K267 carries the post-translational modification N6-(pyridoxal phosphate)lysine.

Belongs to the class-III pyridoxal-phosphate-dependent aminotransferase family. HemL subfamily. As to quaternary structure, homodimer. It depends on pyridoxal 5'-phosphate as a cofactor.

The protein localises to the cytoplasm. The catalysed reaction is (S)-4-amino-5-oxopentanoate = 5-aminolevulinate. It participates in porphyrin-containing compound metabolism; protoporphyrin-IX biosynthesis; 5-aminolevulinate from L-glutamyl-tRNA(Glu): step 2/2. In Syntrophobacter fumaroxidans (strain DSM 10017 / MPOB), this protein is Glutamate-1-semialdehyde 2,1-aminomutase.